A 455-amino-acid polypeptide reads, in one-letter code: Keratin, type I cuticular Ha5 (455 aa).

The interval 1–97 (MASKCLKASF…FGEGILTGNE (97 aa)) is head. An IF rod domain is found at 97–408 (EKETMQSLND…GLLESEDSKL (312 aa)). The interval 98 to 132 (KETMQSLNDRLASYLEKVRQLEQENASLESRIREW) is coil 1A. Positions 133–143 (CEQQVPYMCPD) are linker 1. The interval 144–244 (YQSYFRTMEE…HEEEVNSLRC (101 aa)) is coil 1B. The interval 245 to 260 (QLGDRLNVEVDAAPPV) is linker 12. The tract at residues 261–404 (DLNRVLDEMR…NTYRGLLESE (144 aa)) is coil 2. Positions 405–455 (DSKLPCNPCAPDYSSSKSCLPCLPAVSCSTGAARTTCSPRPVCVPCPGGRF) are tail.

This sequence belongs to the intermediate filament family.

The polypeptide is Keratin, type I cuticular Ha5 (Mus musculus (Mouse)).